The primary structure comprises 582 residues: MLNERQLKIVDLLEQQPRTPGELAQQTGVSGRTILRDIDYLNFTLNGKARIFASGSAGYQLEIFERRSFFQLLQKHDNDDRLLALLLLNTFTPRAQLASALNLPETWVAERLPRLKQRYERTCCLASRPGLGHFIDETEEKRVILLANLLRKDPFLIPLAGITRDNLQHLSTACDNQHRWPLMQGDYLSSLILAIYALRNQLTDEWPQYPGDEIKQIVEHSGLFLGDNAVRTLTGLIEKQHQQAQVISADNVQGLLQRVPGIASLNIIDAQLVENITGHLLRCLAAPVWIAEHRQSSMNNLKAAWPAAFDMSLHFITLLREQLDIPLFDSDLIGLYFACALERHQNERQPIILLSDQNAIATINQLAIERDVLNCRVIIARSLSELVAIREEIEPLLIINNSHYLLDDAVNNYITVKNIITAAGIEQIKHFLATAFIRQQPERFFSAPGSFHYSNVRGESWQHITRQICAQLVAQHHITADEAQRIIAREGEGENLIVNRLAIPHCWSEQERRFRGFFITLAQPVEVNNEVINHVLIACAAADARHELKIFSYLASILCQHPAEIIAGLTGYEAFMELLHKG.

Residues 20 to 39 (PGELAQQTGVSGRTILRDID) constitute a DNA-binding region (H-T-H motif). One can recognise a PTS EIIA type-2 domain in the interval 443 to 582 (RFFSAPGSFH…EAFMELLHKG (140 aa)). Histidine 505 is subject to Phosphohistidine; by HPr.

Functionally, could be involved in the regulation of the transcription of the FRV operon. The sequence is that of Putative frv operon regulatory protein (frvR) from Escherichia coli (strain K12).